A 1960-amino-acid polypeptide reads, in one-letter code: Zinc finger protein 638 (1960 aa).

Positions 1 to 137 (MSRPRFNPRG…SPKVQSRYTK (137 aa)) are disordered. The segment covering 19–31 (APNPPGMRPPGPF) has biased composition (pro residues). Residues Arg-47, Arg-49, and Arg-54 each carry the asymmetric dimethylarginine modification. Positions 60-75 (SYQNMGPQRMNVQVTQ) are enriched in polar residues. Over residues 76–89 (HRTDPRLTKEKLDF) the composition is skewed to basic and acidic residues. Over residues 117–137 (KQSSVTQVTEQSPKVQSRYTK) the composition is skewed to polar residues. Phosphoserine is present on residues Ser-128 and Ser-288. Lys-291 participates in a covalent cross-link: Glycyl lysine isopeptide (Lys-Gly) (interchain with G-Cter in SUMO2). Phosphoserine is present on residues Ser-298, Ser-367, Ser-381, and Ser-418. A disordered region spans residues 352–373 (KSVISSADAHGGPTESKKDYQS). Disordered stretches follow at residues 463-673 (NPEI…QSLS), 749-804 (PGKK…STVK), and 827-899 (KASI…KESE). The span at 468–483 (PSRRNESNRKENETPR) shows a compositional bias: basic and acidic residues. The involved in localization to nuclear speckles stretch occupies residues 470–573 (RRNESNRKEN…ERTSRKSVRS (104 aa)). Residues 484 to 556 (RRSHSPSPRH…SRNLLRRSPK (73 aa)) are compositionally biased toward basic residues. Ser-554 carries the phosphoserine modification. Composition is skewed to basic and acidic residues over residues 565-583 (RTSRKSVRSDRKKALEDGG) and 591-602 (EVTKQKHTETVD). 2 positions are modified to phosphoserine: Ser-606 and Ser-615. Low complexity predominate over residues 618–628 (KPSAKSLSSVK). The residue at position 637 (Ser-637) is a Phosphoserine. The region spanning 676-751 (SILLVSELPE…KSVKVCVPGK (76 aa)) is the RRM 1 domain. Over residues 755–782 (QNKEMKKKPSDIKKSSASALKKETDASK) the composition is skewed to basic and acidic residues. Lys-775 is covalently cross-linked (Glycyl lysine isopeptide (Lys-Gly) (interchain with G-Cter in SUMO2)). Positions 783 to 802 (TMETVSSSSSAKSGQIKSST) are enriched in low complexity. 3 stretches are compositionally biased toward basic and acidic residues: residues 838–854 (KSLEAKKSGNIKNKDSN), 867–879 (ASSEDKATGKSAE), and 888–899 (ATEKEPVNKESE). The RRM 2 domain maps to 902 to 976 (SVVFISNLPN…NQLSISMAPE (75 aa)). A compositionally biased stretch (basic and acidic residues) spans 1082-1092 (SEVQRKNDLEL). 5 disordered regions span residues 1082-1151 (SEVQ…EEPK), 1396-1420 (TVVSSPKAKSTPSKTESHSTFPKPV), 1442-1462 (TRSGLAESNSKSKPTQIGVNR), 1484-1527 (TKQS…KSKE), and 1550-1583 (PSQAKQNPLKGKRKEALKISPSPELNLKKKKGKT). Ser-1099 carries the post-translational modification Phosphoserine. Positions 1140–1151 (VHQEELGKEEPK) are enriched in basic and acidic residues. The span at 1399-1409 (SSPKAKSTPSK) shows a compositional bias: low complexity. Position 1400 is a phosphoserine (Ser-1400). Residues 1442 to 1459 (TRSGLAESNSKSKPTQIG) show a composition bias toward polar residues. Composition is skewed to basic and acidic residues over residues 1484 to 1503 (TKQSQETETKPPIMKRDDSN) and 1518 to 1527 (TTDRSSKSKE). Ser-1635 and Ser-1661 each carry phosphoserine. Disordered stretches follow at residues 1763-1898 (EVGD…SDVP) and 1930-1960 (KSTRHKQNTEKFMAKQRKEKEQNETEERSSR). The segment covering 1772–1790 (NDSKVELARGKIEHHTDKK) has biased composition (basic and acidic residues). Residue Lys-1804 forms a Glycyl lysine isopeptide (Lys-Gly) (interchain with G-Cter in SUMO2) linkage. Residues 1806–1818 (DSFSQVGPGSETV) show a composition bias toward polar residues. Over residues 1819–1831 (TQKDLKTMPERHL) the composition is skewed to basic and acidic residues. Ser-1864 is subject to Phosphoserine. Basic and acidic residues predominate over residues 1870–1885 (AELKDSEPDEKRRKTQ). Residues 1876–1906 (EPDEKRRKTQDSSVGKSMTSDVPGDLDFLVP) form a Matrin-type zinc finger. Over residues 1886-1895 (DSSVGKSMTS) the composition is skewed to polar residues. Over residues 1936 to 1960 (QNTEKFMAKQRKEKEQNETEERSSR) the composition is skewed to basic and acidic residues.

In terms of assembly, interacts with FHL2. Interacts with CEBPA, CEBPD and CEBPG. Interacts with MPHOSPH8 and TASOR components of the HUSH complex; leading to recruitment of the HUSH complex. Interacts with SETDB1. Interacts with HDAC1. Interacts with HDAC4.

The protein localises to the nucleus speckle. Its function is as follows. Transcription factor that binds to cytidine clusters in double-stranded DNA. Plays a key role in the silencing of unintegrated retroviral DNA: some part of the retroviral DNA formed immediately after infection remains unintegrated in the host genome and is transcriptionally repressed. Mediates transcriptional repression of unintegrated viral DNA by specifically binding to the cytidine clusters of retroviral DNA and mediating the recruitment of chromatin silencers, such as the HUSH complex, SETDB1 and the histone deacetylases HDAC1 and HDAC4. Acts as an early regulator of adipogenesis by acting as a transcription cofactor of CEBPs (CEBPA, CEBPD and/or CEBPG), controlling the expression of PPARG and probably of other proadipogenic genes, such as SREBF1. May also regulate alternative splicing of target genes during adipogenesis. The protein is Zinc finger protein 638 of Mus musculus (Mouse).